Here is a 429-residue protein sequence, read N- to C-terminus: MKLQKPKGTQDILPAESAKWQYVEGFAREIFKRYNYAEVRTPIFEHYEVISRSVGDTTDIVTKEMYDFYDKGDRHITLRPEGTAPVVRSYVENKLFAPEVQKPSKFYYMGPMFRYERPQAGRLRQFHQIGVECFGSSNPATDVXTIVMAAHFLKEIGIQGVKLHLNTLGNPESRAAYRQALIDYLTPLKETLSKDSQRRLEENPLRVLDSKEKEDKVAVENAPSILDFLDEESQAHFDAVRQMLENLGVDYIIDTNMVRGLDYYNHTIFEFITEIEGNDLTVCAGGRYDGLVAYFGGPETAGFGFGLGVERLLLILEKQGVALPIENALDVYIAVLGDGANVKALELVQALRQQGFKAERDYLNRKLKAQFKSADVFATKTLITLGESEVESGQVTVKNNQTREEVQVSLETISQNFSEIFEKLGFYTQ.

Belongs to the class-II aminoacyl-tRNA synthetase family. In terms of assembly, homodimer.

The protein localises to the cytoplasm. The catalysed reaction is tRNA(His) + L-histidine + ATP = L-histidyl-tRNA(His) + AMP + diphosphate + H(+). The chain is Histidine--tRNA ligase from Streptococcus pneumoniae serotype 19F (strain G54).